Reading from the N-terminus, the 894-residue chain is Phosphinomethylmalate isomerase (894 aa).

[4Fe-4S] cluster contacts are provided by cysteine 438, cysteine 504, and cysteine 507.

It belongs to the aconitase/IPM isomerase family. [4Fe-4S] cluster serves as cofactor.

The enzyme catalyses phosphinomethylmalate = phosphinomethylisomalate. The catalysed reaction is phosphinomethylmalate = 2-(phosphinatomethylidene)butanedioate + H2O. It carries out the reaction 2-(phosphinatomethylidene)butanedioate + H2O = phosphinomethylisomalate. The protein operates within secondary metabolite biosynthesis; bialaphos biosynthesis. In terms of biological role, isomerase involved in the biosynthesis of phosphinothricin tripeptide (PTT), also known as bialaphos (BA), a natural-product antibiotic and potent herbicide. Probably catalyzes the isomerization of phosphinomethylmalate to phosphinomethylisomalate. Shows no standard aconitase activity with citrate as a substrate and is not able to complement an acnA mutant. The polypeptide is Phosphinomethylmalate isomerase (Streptomyces viridochromogenes (strain DSM 40736 / JCM 4977 / BCRC 1201 / Tue 494)).